Consider the following 639-residue polypeptide: DNA mismatch repair protein MutL (639 aa).

A disordered region spans residues 336–392 (SAHDDPTPAISGAARDEEPRGVENRASAGENRFNRPASSPVASAPRPAHVAAPRMPA). The span at 349-358 (ARDEEPRGVE) shows a compositional bias: basic and acidic residues. The segment covering 370–392 (RPASSPVASAPRPAHVAAPRMPA) has biased composition (low complexity).

It belongs to the DNA mismatch repair MutL/HexB family.

This protein is involved in the repair of mismatches in DNA. It is required for dam-dependent methyl-directed DNA mismatch repair. May act as a 'molecular matchmaker', a protein that promotes the formation of a stable complex between two or more DNA-binding proteins in an ATP-dependent manner without itself being part of a final effector complex. The polypeptide is DNA mismatch repair protein MutL (Edwardsiella ictaluri (strain 93-146)).